A 409-amino-acid chain; its full sequence is Probable plastid-lipid-associated protein 12, chloroplastic (409 aa).

The N-terminal 55 residues, 1-55, are a transit peptide targeting the chloroplast; it reads MVAVRFYAVEMSLPCLCPCPSSPISLSLCSPRFNLLNTTSRRLGLSRNCRTLRIS.

It belongs to the PAP/fibrillin family.

It is found in the plastid. Its subcellular location is the chloroplast thylakoid. The sequence is that of Probable plastid-lipid-associated protein 12, chloroplastic (PAP12) from Arabidopsis thaliana (Mouse-ear cress).